The sequence spans 170 residues: MENIVLIGMPLSGKSTLGRELSKILKYDLIDTDTLIEEMEDKSIKEIFKIYGEDYFREKELKIINKLKKESNKVISTGGGLPIYNKNIYELKKIGFTVYLKVPLEELIKRMVKKEYDTRPLLKNNDTKFLEEMYKNRIEIYEKAHTIICNTNYKESLITIVRAYKKWKGI.

11–16 (LSGKST) is a binding site for ATP. A Mg(2+)-binding site is contributed by Ser-15. Positions 33, 57, and 79 each coordinate substrate. ATP is bound at residue Arg-119. Arg-137 contributes to the substrate binding site.

The protein belongs to the shikimate kinase family. As to quaternary structure, monomer. Mg(2+) serves as cofactor.

The protein resides in the cytoplasm. The catalysed reaction is shikimate + ATP = 3-phosphoshikimate + ADP + H(+). Its pathway is metabolic intermediate biosynthesis; chorismate biosynthesis; chorismate from D-erythrose 4-phosphate and phosphoenolpyruvate: step 5/7. Its function is as follows. Catalyzes the specific phosphorylation of the 3-hydroxyl group of shikimic acid using ATP as a cosubstrate. The chain is Shikimate kinase from Clostridium botulinum (strain ATCC 19397 / Type A).